The primary structure comprises 548 residues: Tryprostatin B 6-hydroxylase (548 aa).

3 helical membrane-spanning segments follow: residues 5–25 (MKCG…LWYF), 35–54 (WRYV…LLYA), and 73–93 (LLMV…RTLF). C491 is a binding site for heme.

This sequence belongs to the cytochrome P450 family. It depends on heme as a cofactor.

It localises to the membrane. It catalyses the reaction tryprostatin B + reduced [NADPH--hemoprotein reductase] + O2 = 6-hydroxytryprostatin B + oxidized [NADPH--hemoprotein reductase] + H2O + H(+). It functions in the pathway mycotoxin biosynthesis. Functionally, cytochrome P450 monooxygenase; part of the gene cluster that mediates the biosynthesis of fumitremorgins, indole alkaloids that carry not only intriguing chemical structures, but also interesting biological and pharmacological activities. The biosynthesis of fumitremorgin-type alkaloids begins by condensation of the two amino acids L-tryptophan and L-proline to brevianamide F, catalyzed by the non-ribosomal peptide synthetase ftmPS/ftmA. Brevianamide F is then prenylated by the prenyltransferase ftmPT1/ftmB in the presence of dimethylallyl diphosphate, resulting in the formation of tryprostatin B. The three cytochrome P450 monooxygenases, ftmP450-1/ftmC, ftmP450-2/ftmE and ftmP450-3/FtmG, are responsible for the conversion of tryprostatin B to 6-hydroxytryprostatin B, tryprostatin A to fumitremorgin C and fumitremorgin C to 12,13-dihydroxyfumitremorgin C, respectively. The putative methyltransferase ftmMT/ftmD is expected for the conversion of 6-hydroxytryprostatin B to tryprostatin A. FtmPT2/FtmH catalyzes the prenylation of 12,13-dihydroxyfumitre-morgin C in the presence of dimethylallyl diphosphate, resulting in the formation of fumitremorgin B. Fumitremorgin B is further converted to verruculogen by ftmOx1/ftmF via the insertion of an endoperoxide bond between the two prenyl moieties. Finally, verruculogen is further converted to fumitremorgin A by the verruculogen prenyltransferase ftmPT3. The protein is Tryprostatin B 6-hydroxylase of Neosartorya fischeri (strain ATCC 1020 / DSM 3700 / CBS 544.65 / FGSC A1164 / JCM 1740 / NRRL 181 / WB 181) (Aspergillus fischerianus).